The sequence spans 307 residues: Agmatinase (307 aa).

Residues histidine 128, aspartate 151, histidine 153, aspartate 155, aspartate 232, and aspartate 234 each coordinate Mn(2+).

Belongs to the arginase family. Agmatinase subfamily. Requires Mn(2+) as cofactor.

It catalyses the reaction agmatine + H2O = urea + putrescine. Its pathway is amine and polyamine biosynthesis; putrescine biosynthesis via agmatine pathway; putrescine from agmatine: step 1/1. Catalyzes the formation of putrescine from agmatine. The chain is Agmatinase from Neisseria gonorrhoeae (strain ATCC 700825 / FA 1090).